We begin with the raw amino-acid sequence, 470 residues long: NKIKPGVAYSVITTENDTQTVFVDMPRLERRRANPKDVAAVILGGGEGTKLFPLTSRTATPAVPVGGCYRLIDIPMSNCINSAINKIFVLTQYNSAPLNRHIARTYFGNGVSFGDGFVEVLAATQTPGEAGKKWFQGTADAVRKFIWVFEDAKNKNIENIVVLSGDHLYRMDYMELVQNHIDRNADITLSCAPAEDSRASDFGLVKIDSRGRVVQFAEKPKGFDLKAMQVDTTLVGLSPQDAKKSPYIASMGVYVFKTDVLLKLLKWSYPTSNDFGSEIIPAAIDDYNVQAYIFKDYWEDIGTIKSFYNASLALTQEFPEFQFYDPKTPFYTSPRFLPPTKIDNCKIKDAIISHGCFLRDCSVEHSIVGERSRLDCGVELKDTFMMGADYYQTESEIASLLAEGKVPIGIGENTKIRKCIIDKNAKIGKNVSIINKDGVQEADRPEEGFYIRSGIIIILEKATIRDGTVI.

Belongs to the bacterial/plant glucose-1-phosphate adenylyltransferase family. In terms of assembly, heterotetramer. As to expression, prominently expressed in the leaves and a weaker expression is seen in the tubers.

It localises to the plastid. The protein localises to the chloroplast. The protein resides in the amyloplast. It catalyses the reaction alpha-D-glucose 1-phosphate + ATP + H(+) = ADP-alpha-D-glucose + diphosphate. It functions in the pathway glycan biosynthesis; starch biosynthesis. Activated by 3'phosphoglycerate, inhibited by orthophosphate. Allosteric regulation. Its function is as follows. This protein plays a role in synthesis of starch. It catalyzes the synthesis of the activated glycosyl donor, ADP-glucose from Glc-1-P and ATP. This Solanum tuberosum (Potato) protein is Glucose-1-phosphate adenylyltransferase large subunit 1 (AGPS1).